The primary structure comprises 266 residues: MLRRIKVGSNLNKKESLLDAFVKTYLQILEPISSKRLKELADLKISCATIRNYFQILSKEGMLYQAHSSGARLPTFKAFENYWQKSLRFETLKVNEKRLKSASENFGLFTLLKKPSLERLERVIECEKRFLILDFLAFSCALGYSVKMEKFLLELVGRSVKEVRSIAASFNALSLARQLERLEYSNTQITRFNLMGLKTLLNSPLFFDILGGKVLERLSKGLHFIEPDCMLVTRPVEFQNKRMQLLCVGKLECDYEGFFQTISEEE.

The protein belongs to the HrcA family.

Its function is as follows. Negative regulator of class I heat shock genes (grpE-dnaK-dnaJ and groELS operons). Prevents heat-shock induction of these operons. This is Heat-inducible transcription repressor HrcA from Helicobacter pylori (strain ATCC 700392 / 26695) (Campylobacter pylori).